We begin with the raw amino-acid sequence, 476 residues long: Argininosuccinate lyase (476 aa).

This sequence belongs to the lyase 1 family. Argininosuccinate lyase subfamily.

It is found in the cytoplasm. It carries out the reaction 2-(N(omega)-L-arginino)succinate = fumarate + L-arginine. It participates in amino-acid biosynthesis; L-arginine biosynthesis; L-arginine from L-ornithine and carbamoyl phosphate: step 3/3. This chain is Argininosuccinate lyase, found in Nitrosospira multiformis (strain ATCC 25196 / NCIMB 11849 / C 71).